The chain runs to 52 residues: Sperm protamine P1 (52 aa).

Residues 1–27 (MARYSCCRSHSRSRSRRRRQRCRRRRR) form a disordered region. A compositionally biased stretch (basic residues) spans 9-27 (SHSRSRSRRRRQRCRRRRR).

The protein belongs to the protamine P1 family. In terms of tissue distribution, testis.

Its subcellular location is the nucleus. It localises to the chromosome. In terms of biological role, protamines substitute for histones in the chromatin of sperm during the haploid phase of spermatogenesis. They compact sperm DNA into a highly condensed, stable and inactive complex. This chain is Sperm protamine P1 (PRM1), found in Rhinolophus ferrumequinum (Greater horseshoe bat).